The sequence spans 599 residues: Prostaglandin G/H synthase 1 (599 aa).

The first 23 residues, 1–23, serve as a signal peptide directing secretion; the sequence is MSRSLLLWFLLFLLLLPPLPVLL. The EGF-like domain maps to 31 to 69; sequence PVNPCCYYPCQHQGICVRFGLDRYQCDCTRTGYSGPNCT. Intrachain disulfides connect Cys-35/Cys-46, Cys-36/Cys-158, Cys-40/Cys-56, and Cys-58/Cys-68. N-linked (GlcNAc...) asparagine glycosylation is found at Asn-67, Asn-103, and Asn-143. His-206 functions as the Proton acceptor in the catalytic mechanism. The For cyclooxygenase activity role is filled by Tyr-384. Residue His-387 coordinates heme b. Cys-568 and Cys-574 form a disulfide bridge.

The protein belongs to the prostaglandin G/H synthase family. In terms of assembly, homodimer. Heme b is required as a cofactor.

The protein resides in the microsome membrane. Its subcellular location is the endoplasmic reticulum membrane. The enzyme catalyses (5Z,8Z,11Z,14Z)-eicosatetraenoate + AH2 + 2 O2 = prostaglandin H2 + A + H2O. It carries out the reaction (5Z,8Z,11Z,14Z)-eicosatetraenoate + 2 O2 = prostaglandin G2. It catalyses the reaction prostaglandin G2 + AH2 = prostaglandin H2 + A + H2O. The catalysed reaction is (9Z,12Z)-octadecadienoate + AH2 + O2 = (9R)-hydroxy-(10E,12Z)-octadecadienoate + A + H2O. The enzyme catalyses (9Z,12Z)-octadecadienoate + AH2 + O2 = (9S)-hydroxy-(10E,12Z)-octadecadienoate + A + H2O. It carries out the reaction (9Z,12Z)-octadecadienoate + AH2 + O2 = (13S)-hydroxy-(9Z,11E)-octadecadienoate + A + H2O. It catalyses the reaction (9Z,12Z)-octadecadienoate + AH2 + O2 = (13R)-hydroxy-(9Z,11E)-octadecadienoate + A + H2O. It participates in lipid metabolism; prostaglandin biosynthesis. With respect to regulation, the cyclooxygenase activity is inhibited by nonsteroidal anti-inflammatory drugs (NSAIDs) including ibuprofen, flurbiprofen, ketoprofen, naproxen, flurbiprofen, anirolac, fenclofenac and diclofenac. Dual cyclooxygenase and peroxidase that plays an important role in the biosynthesis pathway of prostanoids, a class of C20 oxylipins mainly derived from arachidonate ((5Z,8Z,11Z,14Z)-eicosatetraenoate, AA, C20:4(n-6)), with a particular role in the inflammatory response. The cyclooxygenase activity oxygenates AA to the hydroperoxy endoperoxide prostaglandin G2 (PGG2), and the peroxidase activity reduces PGG2 to the hydroxy endoperoxide prostaglandin H2 (PGH2), the precursor of all 2-series prostaglandins and thromboxanes. This complex transformation is initiated by abstraction of hydrogen at carbon 13 (with S-stereochemistry), followed by insertion of molecular O2 to form the endoperoxide bridge between carbon 9 and 11 that defines prostaglandins. The insertion of a second molecule of O2 (bis-oxygenase activity) yields a hydroperoxy group in PGG2 that is then reduced to PGH2 by two electrons. Involved in the constitutive production of prostanoids in particular in the stomach and platelets. In gastric epithelial cells, it is a key step in the generation of prostaglandins, such as prostaglandin E2 (PGE2), which plays an important role in cytoprotection. In platelets, it is involved in the generation of thromboxane A2 (TXA2), which promotes platelet activation and aggregation, vasoconstriction and proliferation of vascular smooth muscle cells. Can also use linoleate (LA, (9Z,12Z)-octadecadienoate, C18:2(n-6)) as substrate and produce hydroxyoctadecadienoates (HODEs) in a regio- and stereospecific manner, being (9R)-HODE ((9R)-hydroxy-(10E,12Z)-octadecadienoate) and (13S)-HODE ((13S)-hydroxy-(9Z,11E)-octadecadienoate) its major products. In Homo sapiens (Human), this protein is Prostaglandin G/H synthase 1.